Consider the following 380-residue polypeptide: Cytochrome b (380 aa).

The next 4 helical transmembrane spans lie at 34-54 (FGSL…LLAM), 78-99 (WLIR…YLHI), 114-134 (WNTG…GYVL), and 179-199 (FFAL…IHLT). Residues H84 and H98 each coordinate heme b. 2 residues coordinate heme b: H183 and H197. H202 contacts a ubiquinone. 4 helical membrane-spanning segments follow: residues 227–247 (TKDL…ALFS), 289–309 (LGGV…PFLH), 321–341 (LSQI…WVGS), and 348–368 (FIII…ILFP).

Belongs to the cytochrome b family. In terms of assembly, the cytochrome bc1 complex contains 11 subunits: 3 respiratory subunits (MT-CYB, CYC1 and UQCRFS1), 2 core proteins (UQCRC1 and UQCRC2) and 6 low-molecular weight proteins (UQCRH/QCR6, UQCRB/QCR7, UQCRQ/QCR8, UQCR10/QCR9, UQCR11/QCR10 and a cleavage product of UQCRFS1). This cytochrome bc1 complex then forms a dimer. Heme b is required as a cofactor.

The protein resides in the mitochondrion inner membrane. Component of the ubiquinol-cytochrome c reductase complex (complex III or cytochrome b-c1 complex) that is part of the mitochondrial respiratory chain. The b-c1 complex mediates electron transfer from ubiquinol to cytochrome c. Contributes to the generation of a proton gradient across the mitochondrial membrane that is then used for ATP synthesis. The polypeptide is Cytochrome b (MT-CYB) (Aerodramus vulcanorum (Volcano swiftlet)).